A 209-amino-acid polypeptide reads, in one-letter code: Chaperone protein TorD (209 aa).

Belongs to the TorD/DmsD family. TorD subfamily.

Its subcellular location is the cytoplasm. Involved in the biogenesis of TorA. Acts on TorA before the insertion of the molybdenum cofactor and, as a result, probably favors a conformation of the apoenzyme that is competent for acquiring the cofactor. The protein is Chaperone protein TorD of Shewanella massilia.